The following is a 91-amino-acid chain: DNA-binding protein HU (91 aa).

Belongs to the bacterial histone-like protein family.

Functionally, histone-like DNA-binding protein which is capable of wrapping DNA to stabilize it, and thus to prevent its denaturation under extreme environmental conditions. Also seems to act as a fortuitous virulence factor in delayed sequelae by binding to heparan sulfate-proteoglycans in the extracellular matrix of target organs and acting as a nidus for in situ immune complex formation. This chain is DNA-binding protein HU (hup), found in Streptococcus downei (Streptococcus sobrinus).